We begin with the raw amino-acid sequence, 367 residues long: Serine/threonine-protein kinase Sgk2 (367 aa).

The segment at 1 to 28 (MASSPVGVPSPQPSRANGNINLGPSANP) is disordered. S10 carries the phosphoserine modification. Polar residues predominate over residues 15–28 (RANGNINLGPSANP). The region spanning 35–292 (FDFLKVIGKG…FLDIKNHMFF (258 aa)) is the Protein kinase domain. ATP contacts are provided by residues 41–49 (IGKGNYGKV) and K64. The Nuclear localization signal signature appears at 68-77 (KKSILKNKEQ). D159 serves as the catalytic Proton acceptor. T193 carries the phosphothreonine; by PDPK1 modification. Residues 293–367 (SPINWDDLYH…AQDDDDILDS (75 aa)) form the AGC-kinase C-terminal domain. Phosphoserine is present on residues S334 and S356. A Phosphotyrosine modification is found at Y357.

It belongs to the protein kinase superfamily. AGC Ser/Thr protein kinase family. In terms of processing, activated by phosphorylation on Ser-356 by an unknown kinase (may be mTORC2 but not confirmed), transforming it into a substrate for PDPK1 which then phosphorylates it on Thr-193. In terms of tissue distribution, expressed in the proximal tubule and thick ascending limb of the loop of Henle (TALH).

It is found in the cytoplasm. It localises to the nucleus. It carries out the reaction L-seryl-[protein] + ATP = O-phospho-L-seryl-[protein] + ADP + H(+). The catalysed reaction is L-threonyl-[protein] + ATP = O-phospho-L-threonyl-[protein] + ADP + H(+). With respect to regulation, two specific sites, one in the kinase domain (Thr-193) and the other in the C-terminal regulatory region (Ser-356), need to be phosphorylated for its full activation. Serine/threonine-protein kinase which is involved in the regulation of a wide variety of ion channels, membrane transporters, cell growth, survival and proliferation. Up-regulates Na(+) channels: SCNN1A/ENAC, K(+) channels: KCNA3/Kv1.3, KCNE1 and KCNQ1, amino acid transporter: SLC6A19, glutamate transporter: SLC1A6/EAAT4, glutamate receptors: GRIA1/GLUR1 and GRIK2/GLUR6, Na(+)/H(+) exchanger: SLC9A3/NHE3, and the Na(+)/K(+) ATPase. The sequence is that of Serine/threonine-protein kinase Sgk2 (Sgk2) from Rattus norvegicus (Rat).